The chain runs to 109 residues: Transcription initiation factor IIA subunit 2 (109 aa).

This sequence belongs to the TFIIA subunit 2 family. In terms of assembly, TFIIA is a heterodimer composed of the large toa1 and the small toa2 subunits.

The protein resides in the nucleus. It is found in the cytoplasm. In terms of biological role, TFIIA is a component of the transcription machinery of RNA polymerase II and plays an important role in transcriptional activation. TFIIA in a complex with tbp mediates transcriptional activity. This chain is Transcription initiation factor IIA subunit 2 (toa2), found in Schizosaccharomyces pombe (strain 972 / ATCC 24843) (Fission yeast).